We begin with the raw amino-acid sequence, 312 residues long: Protoheme IX farnesyltransferase (312 aa).

Transmembrane regions (helical) follow at residues 34-54, 56-76, 119-139, 152-172, 179-199, 225-245, 247-267, and 283-303; these read LVIFTALVGLMIAPGHVHPVL, FTAILCIAVGAGASGALNMAL, ALVNWYAGGLLAFTIFFYVVI, IVIGGAAGALPPVVAWAAATG, LLLFLIIFFWTPPHFWALALF, ILLYTIVLVAIAAAPWPLGYF, WVYGVTSLVLGAGMLVLAINV, and LFAFSILYLFALFAVLLLDVL.

Belongs to the UbiA prenyltransferase family. Protoheme IX farnesyltransferase subfamily.

It is found in the cell inner membrane. The catalysed reaction is heme b + (2E,6E)-farnesyl diphosphate + H2O = Fe(II)-heme o + diphosphate. The protein operates within porphyrin-containing compound metabolism; heme O biosynthesis; heme O from protoheme: step 1/1. Its function is as follows. Converts heme B (protoheme IX) to heme O by substitution of the vinyl group on carbon 2 of heme B porphyrin ring with a hydroxyethyl farnesyl side group. This chain is Protoheme IX farnesyltransferase, found in Nitrobacter hamburgensis (strain DSM 10229 / NCIMB 13809 / X14).